Here is a 253-residue protein sequence, read N- to C-terminus: tRNA pseudouridine synthase A (253 aa).

D52 functions as the Nucleophile in the catalytic mechanism. Y111 contributes to the substrate binding site.

It belongs to the tRNA pseudouridine synthase TruA family. In terms of assembly, homodimer.

The enzyme catalyses uridine(38/39/40) in tRNA = pseudouridine(38/39/40) in tRNA. Its function is as follows. Formation of pseudouridine at positions 38, 39 and 40 in the anticodon stem and loop of transfer RNAs. This Methylobacterium radiotolerans (strain ATCC 27329 / DSM 1819 / JCM 2831 / NBRC 15690 / NCIMB 10815 / 0-1) protein is tRNA pseudouridine synthase A.